We begin with the raw amino-acid sequence, 225 residues long: Probable 3-keto-L-gulonate-6-phosphate decarboxylase (225 aa).

Aspartate 11 is a substrate binding site. Mg(2+)-binding residues include glutamate 33 and aspartate 62. Arginine 202 contributes to the substrate binding site.

This sequence belongs to the HPS/KGPDC family. KGPDC subfamily. Homodimer. Requires Mg(2+) as cofactor.

It catalyses the reaction 3-dehydro-L-gulonate 6-phosphate + H(+) = L-xylulose 5-phosphate + CO2. In terms of biological role, catalyzes the decarboxylation of 3-keto-L-gulonate-6-P into L-xylulose-5-P. This Haemophilus influenzae (strain ATCC 51907 / DSM 11121 / KW20 / Rd) protein is Probable 3-keto-L-gulonate-6-phosphate decarboxylase (sgbH).